The sequence spans 422 residues: Glutamate-1-semialdehyde 2,1-aminomutase (422 aa).

Lysine 265 bears the N6-(pyridoxal phosphate)lysine mark.

The protein belongs to the class-III pyridoxal-phosphate-dependent aminotransferase family. HemL subfamily. Pyridoxal 5'-phosphate is required as a cofactor.

The protein localises to the cytoplasm. The catalysed reaction is (S)-4-amino-5-oxopentanoate = 5-aminolevulinate. It functions in the pathway porphyrin-containing compound metabolism; protoporphyrin-IX biosynthesis; 5-aminolevulinate from L-glutamyl-tRNA(Glu): step 2/2. The sequence is that of Glutamate-1-semialdehyde 2,1-aminomutase from Methanococcoides burtonii (strain DSM 6242 / NBRC 107633 / OCM 468 / ACE-M).